Consider the following 293-residue polypeptide: ATP synthase gamma chain (293 aa).

Belongs to the ATPase gamma chain family. F-type ATPases have 2 components, CF(1) - the catalytic core - and CF(0) - the membrane proton channel. CF(1) has five subunits: alpha(3), beta(3), gamma(1), delta(1), epsilon(1). CF(0) has three main subunits: a, b and c.

The protein resides in the cell membrane. In terms of biological role, produces ATP from ADP in the presence of a proton gradient across the membrane. The gamma chain is believed to be important in regulating ATPase activity and the flow of protons through the CF(0) complex. In Streptococcus gordonii (strain Challis / ATCC 35105 / BCRC 15272 / CH1 / DL1 / V288), this protein is ATP synthase gamma chain.